A 373-amino-acid chain; its full sequence is uncharacterized protein (373 aa).

A helical membrane pass occupies residues 180–202 (YYVVALGTLALGSILGYTAKYVW).

The protein resides in the membrane. This is an uncharacterized protein from Rickettsia prowazekii (strain Madrid E).